We begin with the raw amino-acid sequence, 144 residues long: Large ribosomal subunit protein uL16 (144 aa).

It belongs to the universal ribosomal protein uL16 family. In terms of assembly, part of the 50S ribosomal subunit.

Functionally, binds 23S rRNA and is also seen to make contacts with the A and possibly P site tRNAs. This Enterococcus faecalis (strain ATCC 700802 / V583) protein is Large ribosomal subunit protein uL16.